The following is a 328-amino-acid chain: PhoH-like protein (328 aa).

135–142 contacts ATP; the sequence is GPAGTGKT.

Belongs to the PhoH family.

It is found in the cytoplasm. The chain is PhoH-like protein from Synechocystis sp. (strain ATCC 27184 / PCC 6803 / Kazusa).